The sequence spans 588 residues: Acid beta-fructofuranosidase 1, vacuolar (588 aa).

The Cytoplasmic portion of the chain corresponds to 1-31 (MDTSTSAYAPLPGEDPLFSGHPPASLRRSWK). The propeptide at 1–115 (MDTSTSAYAP…LSYNWTNAMF (115 aa)) is removed in mature form. The chain crosses the membrane as a helical; Signal-anchor for type II membrane protein span at residues 32-52 (GFAVIFASVLFLLSLVGLIIH). Residues 53–588 (QGPQQPPDVM…LRALRKEVGR (536 aa)) lie on the Lumenal side of the membrane. Residues 57-86 (QPPDVMPDKQDEHHHPQSTTPASETTASWE) are disordered. Basic and acidic residues predominate over residues 62–71 (MPDKQDEHHH). Residues 73–84 (QSTTPASETTAS) are compositionally biased toward polar residues. Substrate is bound by residues 130-133 (WMND), Gln149, and Trp157. The active site involves Asp133. Residue Asn159 is glycosylated (N-linked (GlcNAc...) asparagine). 192–193 (WS) serves as a coordination point for substrate. N-linked (GlcNAc...) asparagine glycosylation is present at Asn226. Substrate-binding positions include 256–257 (RD), Glu311, and Asp344. Cys499 and Cys545 are disulfide-bonded.

This sequence belongs to the glycosyl hydrolase 32 family. Monomer. May be present in two forms, a 70 kDa monomer and a heterodimer of the 30 kDa and 38 kDa subunits. The ratio of the levels of the two forms within cells appears to be regulated developmentally. Post-translationally, glycosylated. Expressed in buds, stems, roots and leaves. Expressed in the epidermal cells of young leaves and of primordial leaves.

Its subcellular location is the membrane. The protein localises to the vacuole lumen. It carries out the reaction Hydrolysis of terminal non-reducing beta-D-fructofuranoside residues in beta-D-fructofuranosides.. In terms of biological role, acidic vacuolar invertase involved in light-induced bud burst. The chain is Acid beta-fructofuranosidase 1, vacuolar from Rosa hybrid cultivar.